The sequence spans 158 residues: 2-C-methyl-D-erythritol 2,4-cyclodiphosphate synthase (158 aa).

A divalent metal cation is bound by residues D9 and H11. 4-CDP-2-C-methyl-D-erythritol 2-phosphate-binding positions include 9-11 (DVH) and 35-36 (HS). H43 serves as a coordination point for a divalent metal cation. 4-CDP-2-C-methyl-D-erythritol 2-phosphate is bound by residues 57–59 (DIG), 62–66 (FPDTD), 101–107 (AQKPKMA), 133–136 (TTTE), F140, and R143.

Belongs to the IspF family. As to quaternary structure, homotrimer. It depends on a divalent metal cation as a cofactor.

It carries out the reaction 4-CDP-2-C-methyl-D-erythritol 2-phosphate = 2-C-methyl-D-erythritol 2,4-cyclic diphosphate + CMP. It functions in the pathway isoprenoid biosynthesis; isopentenyl diphosphate biosynthesis via DXP pathway; isopentenyl diphosphate from 1-deoxy-D-xylulose 5-phosphate: step 4/6. In terms of biological role, involved in the biosynthesis of isopentenyl diphosphate (IPP) and dimethylallyl diphosphate (DMAPP), two major building blocks of isoprenoid compounds. Catalyzes the conversion of 4-diphosphocytidyl-2-C-methyl-D-erythritol 2-phosphate (CDP-ME2P) to 2-C-methyl-D-erythritol 2,4-cyclodiphosphate (ME-CPP) with a corresponding release of cytidine 5-monophosphate (CMP). This Bacillus cereus (strain ATCC 10987 / NRS 248) protein is 2-C-methyl-D-erythritol 2,4-cyclodiphosphate synthase.